A 451-amino-acid chain; its full sequence is MNLEGGGRGGEFGMSAVSCGNGKLRQWLIDQIDSGKYPGLVWENEEKSIFRIPWKHAGKQDYNREEDAALFKAWALFKGKFREGIDKPDPPTWKTRLRCALNKSNDFEELVERSQLDISDPYKVYRIVPEGAKKGAKQLTLEDPQMSMSHPYTMTTPYPSLPAQQVHNYMMPPLDRSWRDYVPDQPHPEIPYQCPMTFGPRGHHWQGPACENGCQVTGTFYACAPPESQAPGVPTEPSIRSAEALAFSDCRLHICLYYREILVKELTTSSPEGCRISHGHTYDASNLDQVLFPYPEDNGQRKNIEKLLSHLERGVVLWMAPDGLYAKRLCQSRIYWDGPLALCNDRPNKLERDQTCKLFDTQQFLSELQAFAHHGRSLPRFQVTLCFGEEFPDPQRQRKLITAHVEPLLARQLYYFAQQNSGHFLRGYDLPEHISNPEDYHRSIRHSSIQE.

Residues 21–129 (NGKLRQWLID…DPYKVYRIVP (109 aa)) constitute a DNA-binding region (IRF tryptophan pentad repeat). Phosphoserine; by ROCK2 is present on residues S447 and S448.

It belongs to the IRF family. As to quaternary structure, interacts with the BATF-JUNB heterodimer. Interacts with BATF (via bZIP domain); the interaction is direct. Interacts with SPIB. Interacts with DEF6. Directly interacts with NLRP3 in the nucleus of Th2 cells; this interaction enhances IRF4 ability to bind to the IL4 promoter and is required for optimal IRF4-dependent IL4 transcription. Interacts with SPI1. In terms of processing, phosphorylation by ROCK2 regulates IL-17 and IL-21 production. As to expression, lymphoid cells.

The protein resides in the nucleus. Its subcellular location is the cytoplasm. Its function is as follows. Transcriptional activator. Binds to the interferon-stimulated response element (ISRE) of the MHC class I promoter. Binds the immunoglobulin lambda light chain enhancer, together with PU.1. Probably plays a role in ISRE-targeted signal transduction mechanisms specific to lymphoid cells. Involved in CD8(+) dendritic cell differentiation by forming a complex with the BATF-JUNB heterodimer in immune cells, leading to recognition of AICE sequence (5'-TGAnTCA/GAAA-3'), an immune-specific regulatory element, followed by cooperative binding of BATF and IRF4 and activation of genes. The protein is Interferon regulatory factor 4 of Homo sapiens (Human).